Reading from the N-terminus, the 283-residue chain is Polyamine aminopropyltransferase (283 aa).

The PABS domain occupies 5–238; the sequence is TTWIDEYHKG…GIWSWTFASS (234 aa). Glutamine 32 serves as a coordination point for S-methyl-5'-thioadenosine. Positions 63 and 87 each coordinate spermidine. S-methyl-5'-thioadenosine contacts are provided by residues glutamate 107 and 139–140; that span reads DG. Residue aspartate 158 is the Proton acceptor of the active site. 158–161 is a spermidine binding site; sequence DCSD.

This sequence belongs to the spermidine/spermine synthase family. In terms of assembly, homodimer or homotetramer.

Its subcellular location is the cytoplasm. It catalyses the reaction S-adenosyl 3-(methylsulfanyl)propylamine + putrescine = S-methyl-5'-thioadenosine + spermidine + H(+). It functions in the pathway amine and polyamine biosynthesis; spermidine biosynthesis; spermidine from putrescine: step 1/1. Its function is as follows. Catalyzes the irreversible transfer of a propylamine group from the amino donor S-adenosylmethioninamine (decarboxy-AdoMet) to putrescine (1,4-diaminobutane) to yield spermidine. The sequence is that of Polyamine aminopropyltransferase from Prochlorococcus marinus (strain AS9601).